Consider the following 587-residue polypeptide: Synaptotagmin-3 (587 aa).

Over M1–V54 the chain is Vesicular. The cysteine motif stretch occupies residues C10–Q34. Residues S55–V75 traverse the membrane as a helical segment. Residues S76 to E587 are Cytoplasmic-facing. Residues P183–P205 show a composition bias toward low complexity. The segment at P183 to P258 is disordered. Polar residues predominate over residues A213–P224. Low complexity predominate over residues P229–A244. R286 bears the Omega-N-methylarginine mark. C2 domains follow at residues P296–R417 and D428–H562. Ca(2+) contacts are provided by D327, D333, D385, F386, D387, S390, D393, D459, D465, D519, and D521.

It belongs to the synaptotagmin family. In terms of assembly, homodimer; disulfide-linked via the cysteine motif. Can also form heterodimers with SYT6, SYT9 and SYT10. Ca(2+) is required as a cofactor.

The protein localises to the cell membrane. It localises to the cytoplasmic vesicle. Its subcellular location is the secretory vesicle membrane. Ca(2+) sensor involved in Ca(2+)-dependent exocytosis of secretory vesicles through Ca(2+) and phospholipid binding to the C2 domain. Ca(2+) induces binding of the C2-domains to phospholipid membranes and to assembled SNARE-complexes; both actions contribute to triggering exocytosis. Plays a role in dendrite formation by melanocytes. The protein is Synaptotagmin-3 (Syt3) of Mus musculus (Mouse).